The sequence spans 179 residues: Large ribosomal subunit protein uL5 (179 aa).

It belongs to the universal ribosomal protein uL5 family. As to quaternary structure, part of the 50S ribosomal subunit; part of the 5S rRNA/L5/L18/L25 subcomplex. Contacts the 5S rRNA and the P site tRNA. Forms a bridge to the 30S subunit in the 70S ribosome.

Functionally, this is one of the proteins that bind and probably mediate the attachment of the 5S RNA into the large ribosomal subunit, where it forms part of the central protuberance. In the 70S ribosome it contacts protein S13 of the 30S subunit (bridge B1b), connecting the 2 subunits; this bridge is implicated in subunit movement. Contacts the P site tRNA; the 5S rRNA and some of its associated proteins might help stabilize positioning of ribosome-bound tRNAs. This Prochlorococcus marinus (strain NATL2A) protein is Large ribosomal subunit protein uL5.